Reading from the N-terminus, the 217-residue chain is MATLLHIDSSVFPSAASASRAVAETFRTAWQEQHPDGTVIYRDLSANPVPHITADAHTAGFADPATHTPGQAAAFAEREKLIAELEQADAVLIGAPMYNYAIPSTLKAWLDNVILMGRTAANENSKVTGTPVTVIASRGGSYAPGTPREPYEYVQNYLKAVLSDALGLELEFIVPELTMAAHNPAMSELVPLAEASRAKAHEDAAAKAKELADRFAA.

Residues Ser10, 17–19 (SAS), and 137–140 (SRGG) each bind FMN.

Belongs to the azoreductase type 1 family. As to quaternary structure, homodimer. The cofactor is FMN.

It catalyses the reaction 2 a quinone + NADH + H(+) = 2 a 1,4-benzosemiquinone + NAD(+). The catalysed reaction is N,N-dimethyl-1,4-phenylenediamine + anthranilate + 2 NAD(+) = 2-(4-dimethylaminophenyl)diazenylbenzoate + 2 NADH + 2 H(+). Its function is as follows. Quinone reductase that provides resistance to thiol-specific stress caused by electrophilic quinones. In terms of biological role, also exhibits azoreductase activity. Catalyzes the reductive cleavage of the azo bond in aromatic azo compounds to the corresponding amines. This Streptomyces avermitilis (strain ATCC 31267 / DSM 46492 / JCM 5070 / NBRC 14893 / NCIMB 12804 / NRRL 8165 / MA-4680) protein is FMN-dependent NADH:quinone oxidoreductase.